Reading from the N-terminus, the 702-residue chain is Cytolytic toxin-alpha (702 aa).

Residues 2–265 are structural MACPF/CDC pore-forming domain; it reads SSDIIMAGLG…KADLLVRDIS (264 aa). 5 N-linked (GlcNAc...) asparagine glycosylation sites follow: Asn93, Asn100, Asn201, Asn287, and Asn311. A structural FAT domain region spans residues 266–385; the sequence is QGLVRKVHSI…DIIEETKHKA (120 aa). The segment at 386–513 is thioredoxin (THX) domain; it reads VLSQSQMVKD…PIISAVEKIV (128 aa). The B30.2/SPRY domain maps to 505 to 702; the sequence is IISAVEKIVD…RPYHGTVRLL (198 aa). N-linked (GlcNAc...) asparagine glycosylation occurs at Asn530.

This sequence belongs to the SNTX/VTX toxin family. In terms of assembly, heterodimer of alpha and beta subunits; non-covalently linked. Also associates into tetramers or even higher aggregates. Post-translationally, intrachain disulfide bonds may be present in the heterodimer. In terms of tissue distribution, expressed by the venom gland.

It localises to the secreted. Its function is as follows. This heterodimer induces potent hemolytic activities (when tested on rabbit erythrocytes, EC(50)=25-56 ng/mL) due to its ability to form pores in the cell membrane. The pore may be composed of 10 alpha/beta heterodimers. The toxin shows cardiovascular effects that include a vasorelaxant action that may involve the L-arginine-nitric oxid synthase pathway. In addition, it displays edema-inducing activities, increases vascular permeability. It also shows myotoxic activities and interferes irreversibly with neuromuscular function. It also induces irreversible platelet aggregation in rabbit or rat (but not in human or mouse) whole blood. In addition, it has been observed to increase spontaneous quantal acetylcholine release from isolated frog cutaneous pectoris motor endings. The sequence is that of Cytolytic toxin-alpha from Scorpaena plumieri (Spotted scorpionfish).